Reading from the N-terminus, the 357-residue chain is Geranylgeranyl pyrophosphate synthase spyE (357 aa).

A disordered region spans residues 36 to 60 (EAQSQAVPGTRTETEPTGSSPSDLQ). Over residues 50-59 (EPTGSSPSDL) the composition is skewed to polar residues. Lys84, Arg87, and His116 together coordinate isopentenyl diphosphate. Positions 123 and 127 each coordinate Mg(2+). Residue Arg132 coordinates dimethylallyl diphosphate. Residue Arg133 coordinates isopentenyl diphosphate. 3 residues coordinate dimethylallyl diphosphate: Lys210, Thr211, and Gln244. Asp247 is a Mg(2+) binding site. Dimethylallyl diphosphate contacts are provided by Asn251, Lys261, and Lys271.

Belongs to the FPP/GGPP synthase family. Mg(2+) is required as a cofactor.

It catalyses the reaction isopentenyl diphosphate + dimethylallyl diphosphate = (2E)-geranyl diphosphate + diphosphate. The enzyme catalyses isopentenyl diphosphate + (2E)-geranyl diphosphate = (2E,6E)-farnesyl diphosphate + diphosphate. The catalysed reaction is isopentenyl diphosphate + (2E,6E)-farnesyl diphosphate = (2E,6E,10E)-geranylgeranyl diphosphate + diphosphate. The protein operates within secondary metabolite biosynthesis; terpenoid biosynthesis. Geranylgeranyl pyrophosphate synthase; part of the gene cluster that mediates the biosynthesis of meroterpenoids called sartorypyrones. Within the pathway, spyE provides the spyF cosubstrate geranylgeranyl pyrophosphate (GGPP) for the prenylation of triacetic acid lactone (TAL). The biosynthesis of sartorypyrones begins with the production of triacetic acid lactone (TAL) by the NR-PKS spyA using one molecule of acetyl-CoA and two molecules of malonyl-CoA. The prenyltransferase spyF then conjugates geranylgeranyl pyrophosphate (GGPP) to TAL to form geranylgeranyl-triacetate lactone, for which the pathway-specific geranylgeranyl pyrophosphate synthase (GGPS) spyE is required to provide GGPP. Subsequently, geranylgeranyl-triacetate lactone is epoxidized at the terminal olein by the FAD-dependent monooxygenase spyC, followed by cyclization of the terpenoid component catalyzed by the terpene cyclase spyD to produce both the bicyclic sartorypyrone F and the monocyclic sartorypyrone D. Finally, the last step of the biosynthesis involves the acetylation of the meroterpenoids sartorypyrones D and F by the acetyltransferase SpyB to produce sartorypyrones A and G, respectively. This is Geranylgeranyl pyrophosphate synthase spyE from Aspergillus fumigatus (strain ATCC MYA-4609 / CBS 101355 / FGSC A1100 / Af293) (Neosartorya fumigata).